The sequence spans 333 residues: Transaldolase (333 aa).

Lys135 acts as the Schiff-base intermediate with substrate in catalysis.

The protein belongs to the transaldolase family. Type 1 subfamily. In terms of assembly, homodimer.

The protein resides in the cytoplasm. It catalyses the reaction D-sedoheptulose 7-phosphate + D-glyceraldehyde 3-phosphate = D-erythrose 4-phosphate + beta-D-fructose 6-phosphate. It functions in the pathway carbohydrate degradation; pentose phosphate pathway; D-glyceraldehyde 3-phosphate and beta-D-fructose 6-phosphate from D-ribose 5-phosphate and D-xylulose 5-phosphate (non-oxidative stage): step 2/3. Transaldolase is important for the balance of metabolites in the pentose-phosphate pathway. This is Transaldolase from Prochlorococcus marinus subsp. pastoris (strain CCMP1986 / NIES-2087 / MED4).